The chain runs to 158 residues: Endoribonuclease YbeY (158 aa).

Residues H114, H118, and H124 each coordinate Zn(2+).

The protein belongs to the endoribonuclease YbeY family. Zn(2+) serves as cofactor.

The protein localises to the cytoplasm. Its function is as follows. Single strand-specific metallo-endoribonuclease involved in late-stage 70S ribosome quality control and in maturation of the 3' terminus of the 16S rRNA. The polypeptide is Endoribonuclease YbeY (Legionella pneumophila (strain Paris)).